The following is a 157-amino-acid chain: Endoribonuclease YbeY (157 aa).

3 residues coordinate Zn(2+): H111, H115, and H121.

Belongs to the endoribonuclease YbeY family. It depends on Zn(2+) as a cofactor.

Its subcellular location is the cytoplasm. In terms of biological role, single strand-specific metallo-endoribonuclease involved in late-stage 70S ribosome quality control and in maturation of the 3' terminus of the 16S rRNA. In Pseudomonas putida (strain ATCC 47054 / DSM 6125 / CFBP 8728 / NCIMB 11950 / KT2440), this protein is Endoribonuclease YbeY.